A 192-amino-acid polypeptide reads, in one-letter code: Casparian strip membrane protein 1 (192 aa).

Residues 1–26 (MTKSVRLEEGDASKVLVPVGSNKGVS) are Cytoplasmic-facing. Residues 27–47 (VMDLVLRLVGIAGTLGAAIAM) form a helical membrane-spanning segment. Over 48–75 (GTNEQTLPFFTRFVVFNAEYDDFRSFRL) the chain is Extracellular. Residues 76-96 (FVIVNAIVCAYFVLTLPLSIV) traverse the membrane as a helical segment. Over 97 to 107 (HIMRSAARGSR) the chain is Cytoplasmic. The chain crosses the membrane as a helical span at residues 108-128 (ILLIIMDTVMLALLTAGASAA). The Extracellular segment spans residues 129–161 (ASIVYLAHNGNTSTNWLPVCQQYGDFCQGASGS). Asparagine 139 carries an N-linked (GlcNAc...) asparagine glycan. A helical membrane pass occupies residues 162–182 (LIGSFGAVVVFILIILLGAIA). Residues 183 to 192 (LSRHAKRVVL) are Cytoplasmic-facing.

The protein belongs to the Casparian strip membrane proteins (CASP) family. Homodimer and heterodimers.

It localises to the cell membrane. Regulates membrane-cell wall junctions and localized cell wall deposition. Required for establishment of the Casparian strip membrane domain (CSD) and the subsequent formation of Casparian strips, a cell wall modification of the root endodermis that determines an apoplastic barrier between the intraorganismal apoplasm and the extraorganismal apoplasm and prevents lateral diffusion. The sequence is that of Casparian strip membrane protein 1 from Lactuca saligna (Willowleaf lettuce).